Consider the following 245-residue polypeptide: Dehydrogenase/reductase SDR family member 6 (245 aa).

NAD(+) contacts are provided by residues 16 to 18 (QGI), Asp-37, and Asp-58. Arg-144 serves as a coordination point for substrate. Tyr-147 serves as the catalytic Proton acceptor. NAD(+)-binding positions include Lys-151 and 180–184 (VDTPS). Arg-188 and Arg-205 together coordinate substrate.

Belongs to the short-chain dehydrogenases/reductases (SDR) family. As to quaternary structure, homotetramer.

It is found in the cytoplasm. It catalyses the reaction cis-4-hydroxy-L-proline + NAD(+) = 4-oxo-L-proline + NADH + H(+). It carries out the reaction (R)-3-hydroxybutanoate + NAD(+) = acetoacetate + NADH + H(+). It functions in the pathway amino-acid metabolism. The protein operates within siderophore biosynthesis. In terms of biological role, NAD(H)-dependent dehydrogenase/reductase with a preference for cyclic substrates. Catalyzes stereoselective conversion of 4-oxo-L-proline to cis-4-hydroxy-L-proline, likely a detoxification mechanism for ketoprolines. Mediates the formation of 2,5-dihydroxybenzoate (2,5-DHBA), a siderophore that chelates free cytoplasmic iron, thereby regulating iron transport and homeostasis while protecting cells against free radical-induced oxidative stress. The iron-siderophore complex is imported into mitochondria, providing an iron source for mitochondrial metabolic processes in particular heme synthesis. May act as a 3-hydroxybutyrate dehydrogenase. The chain is Dehydrogenase/reductase SDR family member 6 (bdh2) from Xenopus laevis (African clawed frog).